The following is a 1226-amino-acid chain: Integrin alpha pat-2 (1226 aa).

An N-terminal signal peptide occupies residues 1-25 (MREGSFPRRIGLLLGLLGLLAGVAT). Residues 26 to 1154 (FNIDTKNVVV…IASEEGRDLP (1129 aa)) are Extracellular-facing. 7 FG-GAP repeats span residues 27–94 (NIDT…TCRE), 108–171 (NGSH…NAEE), 178–233 (EPAR…TDRP), 234–290 (NTEY…MMIN), 291–345 (LTDE…KPQY), 362–421 (GKQI…GVRE), and 425–488 (QKIE…PESA). 3 N-linked (GlcNAc...) asparagine glycosylation sites follow: Asn108, Asn228, and Asn290. A glycan (N-linked (GlcNAc...) asparagine) is linked at Asn608. A Cell attachment site motif is present at residues 620–622 (RGD). A glycan (N-linked (GlcNAc...) asparagine) is linked at Asn679. A disordered region spans residues 709 to 733 (SVGGDGSKSAPACSPTSDEPDSDGK). N-linked (GlcNAc...) asparagine glycans are attached at residues Asn775 and Asn819. Disordered stretches follow at residues 898–958 (LRIT…HVYE) and 982–1040 (DYEY…ARFS). Acidic residues predominate over residues 920–931 (REEDDESYEDET). A compositionally biased stretch (low complexity) spans 932–951 (TTQSQSTRHQSTQHQTHHQS). Positions 985–1005 (YIPDDQEYDGDDFEEEDDEDF) are enriched in acidic residues. Residues 1010 to 1026 (SKRVKRNPTPKKKKKGG) show a composition bias toward basic residues. The span at 1027–1040 (EHRGEPRSDKARFS) shows a compositional bias: basic and acidic residues. The helical transmembrane segment at 1155–1177 (WWLYLLAILIGLAILILLILLLW) threads the bilayer. Topologically, residues 1178 to 1226 (RCGFFKRNRPPTEHAELRADRQPNAQYADSQSRYTSQDQYNQGRHGQML) are cytoplasmic. A disordered region spans residues 1191 to 1226 (HAELRADRQPNAQYADSQSRYTSQDQYNQGRHGQML). Positions 1200–1226 (PNAQYADSQSRYTSQDQYNQGRHGQML) are enriched in polar residues.

The protein belongs to the integrin alpha chain family. In terms of assembly, heterodimer of an alpha and a beta subunit. Interacts with beta subunit pat-3. Interacts with dep-1. Component of an integrin containing attachment complex, composed of at least pat-2, pat-3, pat-4, pat-6, unc-52, unc-97 and unc-112. As to expression, expressed in body-wall muscle cells, distal tip cells, and vulval tissue.

The protein localises to the membrane. Functionally, required for muscle development probably through the regulation of the actin-myosin cytoskeleton. Component of an integrin containing attachment complex, which is required for muscle maintenance. During the formation of neuromuscular junctions at the larval stage, negatively regulates membrane protrusion from body wall muscles, probably through lamins such as epi-1, lam-2 and unc-52. Required for distal tip cell migration and dorsal pathfinding. Required for egg-laying. May play a role in cell motility and cell-cell interactions. Plays a role in vulval development. Probably within the alpha pat-2/beta pat-3 integrin receptor complex, plays a role in the negative regulation of let-23 signaling and vulval induction. This is probably partly by restricting the mobility of the let-23 receptor on the plasma membrane of vulval cells which thereby attenuates let-23 signaling. The protein is Integrin alpha pat-2 of Caenorhabditis elegans.